We begin with the raw amino-acid sequence, 495 residues long: UDP-N-acetylmuramoyl-L-alanyl-D-glutamate--2,6-diaminopimelate ligase (495 aa).

Residues Leu-27, Ser-29, and 44 to 46 (HQA) each bind UDP-N-acetyl-alpha-D-muramoyl-L-alanyl-D-glutamate. 116-122 (GTNGKTT) is a binding site for ATP. UDP-N-acetyl-alpha-D-muramoyl-L-alanyl-D-glutamate is bound by residues Asn-157, 158–159 (TT), Ser-185, Gln-191, and Arg-193. N6-carboxylysine is present on Lys-225. Meso-2,6-diaminopimelate-binding positions include Arg-390, 414-417 (DNPR), Gly-465, and Glu-469. The Meso-diaminopimelate recognition motif signature appears at 414–417 (DNPR).

The protein belongs to the MurCDEF family. MurE subfamily. It depends on Mg(2+) as a cofactor. Carboxylation is probably crucial for Mg(2+) binding and, consequently, for the gamma-phosphate positioning of ATP.

It localises to the cytoplasm. It carries out the reaction UDP-N-acetyl-alpha-D-muramoyl-L-alanyl-D-glutamate + meso-2,6-diaminopimelate + ATP = UDP-N-acetyl-alpha-D-muramoyl-L-alanyl-gamma-D-glutamyl-meso-2,6-diaminopimelate + ADP + phosphate + H(+). The protein operates within cell wall biogenesis; peptidoglycan biosynthesis. Catalyzes the addition of meso-diaminopimelic acid to the nucleotide precursor UDP-N-acetylmuramoyl-L-alanyl-D-glutamate (UMAG) in the biosynthesis of bacterial cell-wall peptidoglycan. This chain is UDP-N-acetylmuramoyl-L-alanyl-D-glutamate--2,6-diaminopimelate ligase, found in Shigella flexneri.